The chain runs to 253 residues: Imidazole glycerol phosphate synthase subunit HisF (253 aa).

Residues D11 and D130 contribute to the active site.

This sequence belongs to the HisA/HisF family. Heterodimer of HisH and HisF.

It is found in the cytoplasm. It catalyses the reaction 5-[(5-phospho-1-deoxy-D-ribulos-1-ylimino)methylamino]-1-(5-phospho-beta-D-ribosyl)imidazole-4-carboxamide + L-glutamine = D-erythro-1-(imidazol-4-yl)glycerol 3-phosphate + 5-amino-1-(5-phospho-beta-D-ribosyl)imidazole-4-carboxamide + L-glutamate + H(+). It participates in amino-acid biosynthesis; L-histidine biosynthesis; L-histidine from 5-phospho-alpha-D-ribose 1-diphosphate: step 5/9. IGPS catalyzes the conversion of PRFAR and glutamine to IGP, AICAR and glutamate. The HisF subunit catalyzes the cyclization activity that produces IGP and AICAR from PRFAR using the ammonia provided by the HisH subunit. This chain is Imidazole glycerol phosphate synthase subunit HisF, found in Myxococcus xanthus (strain DK1622).